We begin with the raw amino-acid sequence, 98 residues long: NADH-ubiquinone oxidoreductase chain 4L (98 aa).

3 consecutive transmembrane segments (helical) span residues 1-21 (MTMV…GLLM), 29-49 (SLLC…VTIL), and 61-81 (IILL…LVMV).

The protein belongs to the complex I subunit 4L family. In terms of assembly, core subunit of respiratory chain NADH dehydrogenase (Complex I) which is composed of 45 different subunits.

It localises to the mitochondrion inner membrane. The catalysed reaction is a ubiquinone + NADH + 5 H(+)(in) = a ubiquinol + NAD(+) + 4 H(+)(out). Its function is as follows. Core subunit of the mitochondrial membrane respiratory chain NADH dehydrogenase (Complex I) which catalyzes electron transfer from NADH through the respiratory chain, using ubiquinone as an electron acceptor. Part of the enzyme membrane arm which is embedded in the lipid bilayer and involved in proton translocation. The sequence is that of NADH-ubiquinone oxidoreductase chain 4L (MT-ND4L) from Neomonachus schauinslandi (Hawaiian monk seal).